Consider the following 335-residue polypeptide: Tetraacyldisaccharide 4'-kinase (335 aa).

Residue 58–65 participates in ATP binding; that stretch reads TVGGSGKT.

It belongs to the LpxK family.

It catalyses the reaction a lipid A disaccharide + ATP = a lipid IVA + ADP + H(+). The protein operates within glycolipid biosynthesis; lipid IV(A) biosynthesis; lipid IV(A) from (3R)-3-hydroxytetradecanoyl-[acyl-carrier-protein] and UDP-N-acetyl-alpha-D-glucosamine: step 6/6. In terms of biological role, transfers the gamma-phosphate of ATP to the 4'-position of a tetraacyldisaccharide 1-phosphate intermediate (termed DS-1-P) to form tetraacyldisaccharide 1,4'-bis-phosphate (lipid IVA). The protein is Tetraacyldisaccharide 4'-kinase of Shewanella sp. (strain MR-7).